The sequence spans 485 residues: DNA polymerase subunit gamma-2 (485 aa).

The interval 28–65 (GQPELLTERSSPKGGHVKSHAELEGNGEHPEAPGSGEG) is disordered. Ser-38 is modified (phosphoserine). Residues 46–58 (SHAELEGNGEHPE) are compositionally biased toward basic and acidic residues.

Heterotrimer composed of a catalytic subunit and a homodimer of accessory subunits (POLG:POLG2).

It is found in the mitochondrion. It localises to the mitochondrion matrix. Its subcellular location is the mitochondrion nucleoid. In terms of biological role, accessory subunit of DNA polymerase gamma solely responsible for replication of mitochondrial DNA (mtDNA). Acts as an allosteric regulator of the holoenzyme activities. Enhances the polymerase activity and the processivity of POLG by increasing its interactions with the DNA template. Suppresses POLG exonucleolytic proofreading especially toward homopolymeric templates bearing mismatched termini. Binds to single-stranded DNA. The chain is DNA polymerase subunit gamma-2 from Homo sapiens (Human).